A 325-amino-acid chain; its full sequence is D-alanine--D-alanine ligase (325 aa).

In terms of domain architecture, ATP-grasp spans 109–309 (KRVCKERMLP…FCTLLDQLIE (201 aa)). 136–191 (CRRLPFPMFVKPANLGSSVGISKAHDEQELEAAFSLAKQYDRKIIVERGIEGRELE) contributes to the ATP binding site. Mg(2+) contacts are provided by aspartate 262, glutamate 276, and asparagine 278.

The protein belongs to the D-alanine--D-alanine ligase family. The cofactor is Mg(2+). Mn(2+) serves as cofactor.

Its subcellular location is the cytoplasm. It catalyses the reaction 2 D-alanine + ATP = D-alanyl-D-alanine + ADP + phosphate + H(+). It participates in cell wall biogenesis; peptidoglycan biosynthesis. Its function is as follows. Cell wall formation. The protein is D-alanine--D-alanine ligase of Solibacter usitatus (strain Ellin6076).